Here is a 368-residue protein sequence, read N- to C-terminus: Protein Wnt-1 (368 aa).

Residues 1 to 25 (MRGPALLLALRALCALSALRGTARA) form the signal peptide. 11 disulfide bridges follow: C91-C102, C141-C149, C151-C168, C216-C230, C218-C225, C297-C328, C313-C323, C327-C367, C343-C358, C345-C355, and C350-C351. Residue S222 is the site of O-palmitoleoyl serine; by PORCN attachment.

The protein belongs to the Wnt family. In terms of assembly, forms a soluble 1:1 complex with AFM; this prevents oligomerization and is required for prolonged biological activity. The complex with AFM may represent the physiological form in body fluids. Interacts with PORCN. N-glycosylated. N-glycosylation favors subsequent palmitoleoylation. In terms of processing, palmitoleoylation is required for efficient binding to frizzled receptors. Palmitoleoylation is necessary for proper trafficking to cell surface. Depalmitoleoylated by NOTUM, leading to inhibit Wnt signaling pathway.

Its subcellular location is the secreted. The protein localises to the extracellular space. The protein resides in the extracellular matrix. In terms of biological role, ligand for members of the frizzled family of seven transmembrane receptors. Acts in the canonical Wnt signaling pathway by promoting beta-catenin-dependent transcriptional activation. Developmental protein that promotes cell proliferation in the developing spinal cord. Has a role in osteoblast function, bone development and bone homeostasis. This chain is Protein Wnt-1 (WNT1), found in Gallus gallus (Chicken).